The sequence spans 125 residues: Fluoride-specific ion channel FluC (125 aa).

A run of 4 helical transmembrane segments spans residues 6–26 (GFIALAGAAGTLARYWLSGLV), 34–54 (FPWGTAVVNILGCFLFGLVWE), 68–88 (AVLLTGFMGAFTTFSTFIFES), and 98–118 (LALLANLGFQTILGFAALFAG). Na(+) is bound by residues G76 and T79.

Belongs to the fluoride channel Fluc/FEX (TC 1.A.43) family.

Its subcellular location is the cell inner membrane. The enzyme catalyses fluoride(in) = fluoride(out). With respect to regulation, na(+) is not transported, but it plays an essential structural role and its presence is essential for fluoride channel function. In terms of biological role, fluoride-specific ion channel. Important for reducing fluoride concentration in the cell, thus reducing its toxicity. The sequence is that of Fluoride-specific ion channel FluC from Solidesulfovibrio magneticus (strain ATCC 700980 / DSM 13731 / RS-1) (Desulfovibrio magneticus).